The chain runs to 255 residues: Ribonuclease PH (255 aa).

Residues Arg-86 and 124-126 (GTR) each bind phosphate.

The protein belongs to the RNase PH family. Homohexameric ring arranged as a trimer of dimers.

The catalysed reaction is tRNA(n+1) + phosphate = tRNA(n) + a ribonucleoside 5'-diphosphate. In terms of biological role, phosphorolytic 3'-5' exoribonuclease that plays an important role in tRNA 3'-end maturation. Removes nucleotide residues following the 3'-CCA terminus of tRNAs; can also add nucleotides to the ends of RNA molecules by using nucleoside diphosphates as substrates, but this may not be physiologically important. Probably plays a role in initiation of 16S rRNA degradation (leading to ribosome degradation) during starvation. The polypeptide is Ribonuclease PH (Aquifex aeolicus (strain VF5)).